Consider the following 206-residue polypeptide: FMN-dependent NADH:quinone oxidoreductase (206 aa).

FMN contacts are provided by residues serine 15–serine 17, methionine 94–phenylalanine 97, and threonine 138–glycine 141.

The protein belongs to the azoreductase type 1 family. In terms of assembly, homodimer. FMN is required as a cofactor.

The enzyme catalyses 2 a quinone + NADH + H(+) = 2 a 1,4-benzosemiquinone + NAD(+). It catalyses the reaction N,N-dimethyl-1,4-phenylenediamine + anthranilate + 2 NAD(+) = 2-(4-dimethylaminophenyl)diazenylbenzoate + 2 NADH + 2 H(+). Its function is as follows. Quinone reductase that provides resistance to thiol-specific stress caused by electrophilic quinones. In terms of biological role, also exhibits azoreductase activity. Catalyzes the reductive cleavage of the azo bond in aromatic azo compounds to the corresponding amines. The protein is FMN-dependent NADH:quinone oxidoreductase of Sinorhizobium fredii (strain NBRC 101917 / NGR234).